Here is a 585-residue protein sequence, read N- to C-terminus: uncharacterized protein (585 aa).

Residues 27 to 59 (DDSERSVKSVSVSISDDEDSKTDVQDNMATPST) form a disordered region.

This is an uncharacterized protein from Saccharomyces cerevisiae (strain ATCC 204508 / S288c) (Baker's yeast).